Consider the following 710-residue polypeptide: Solute carrier family 15 member 1 (710 aa).

Residues 1-21 (MGMSKSRGCFGYPLSIFFIVV) form a helical membrane-spanning segment. Over 22 to 53 (NEFCERFSYYGMRALLVLYFRNFLGWDDDLST) the chain is Extracellular. A helical membrane pass occupies residues 54-74 (AIYHTFVALCYLTPILGALIA). At 75–82 (DSWLGKFK) the chain is on the cytoplasmic side. The chain crosses the membrane as a helical span at residues 83 to 103 (TIVSLSIVYTIGQAVISVSSI). Residues 104–118 (NDLTDHDHDGSPNNL) lie on the Extracellular side of the membrane. The chain crosses the membrane as a helical span at residues 119–139 (PLHVALSMIGLALIALGTGGI). The Cytoplasmic segment spans residues 140–161 (KPCVSAFGGDQFEEGQEKQRNR). The helical transmembrane segment at 162–182 (FFSIFYLAINAGSLLSTIITP) threads the bilayer. The Extracellular portion of the chain corresponds to 183 to 198 (ILRVQQCGIHSQQACY). The chain crosses the membrane as a helical span at residues 199–219 (PLAFGVPAALMAVALIVFVLG). The Cytoplasmic segment spans residues 220–276 (SGMYKKFQPQGNIMGKVAKCIRFAIKNRFRHRSKAFPKRNHWLDWAKEKYDERLISQ). The helical transmembrane segment at 277-297 (IKIMTKVMFLYIPLPMFWALF) threads the bilayer. The Extracellular portion of the chain corresponds to 298-327 (DQQGSRWTLQATTMTGKIGTIEIQPDQMQT). The helical transmembrane segment at 328–348 (VNAILIVIMVPIVDAVVYPLI) threads the bilayer. Topologically, residues 349–361 (AKCGFNFTSLKKM) are cytoplasmic. The helical transmembrane segment at 362–382 (TVGMFLASMAFVVAAIVQVEI) threads the bilayer. Topologically, residues 383–586 (DKTLPVFPSG…PPNTVNMALQ (204 aa)) are extracellular. An extracellular domain (ECD) region spans residues 383–586 (DKTLPVFPSG…PPNTVNMALQ (204 aa)). N-linked (GlcNAc...) asparagine glycans are attached at residues Asn415, Asn439, Asn510, Asn532, and Asn539. The chain crosses the membrane as a helical span at residues 587–607 (IPQYFLLTCGEVVFSVTGLEF). The Cytoplasmic segment spans residues 608 to 621 (SYSQAPSNMKSVLQ). The helical transmembrane segment at 622–642 (AGWLLTVAIGNIIVLIVAEAG) threads the bilayer. The Extracellular portion of the chain corresponds to 643–647 (HFDKQ). The helical transmembrane segment at 648 to 668 (WAEYVLFASLLLVVCIIFAIM) threads the bilayer. Topologically, residues 669-710 (ARFYTYINPAEIEAQFDEDEKKKGVGKENPYSSLEPVSQTNM) are cytoplasmic. The tract at residues 687–710 (DEKKKGVGKENPYSSLEPVSQTNM) is disordered. A compositionally biased stretch (polar residues) spans 698-710 (PYSSLEPVSQTNM).

Belongs to the major facilitator superfamily. Proton-dependent oligopeptide transporter (POT/PTR) (TC 2.A.17) family. As to quaternary structure, interacts (via extracellular domain region) with trypsin. In terms of tissue distribution, highly expressed in small intestine. Expression is restricted to pinealocytes.

It is found in the apical cell membrane. It catalyses the reaction a dipeptide(out) + H(+)(out) = a dipeptide(in) + H(+)(in). It carries out the reaction an L-amino acid tripeptide(out) + H(+)(out) = an L-amino acid tripeptide(in) + H(+)(in). The enzyme catalyses L-alanyl-L-lysine(out) + H(+)(out) = L-alanyl-L-lysine(in) + H(+)(in). The catalysed reaction is L-alanyl-L-proline(out) + H(+)(out) = L-alanyl-L-proline(in) + H(+)(in). It catalyses the reaction L-alanyl-L-valine(out) + H(+)(out) = L-alanyl-L-valine(in) + H(+)(in). It carries out the reaction carnosine(out) + H(+)(out) = carnosine(in) + H(+)(in). The enzyme catalyses glycyl-L-glutamine(out) + H(+)(out) = glycyl-L-glutamine(in) + H(+)(in). The catalysed reaction is glycyl-L-leucine(out) + H(+)(out) = glycyl-L-leucine(in) + H(+)(in). It catalyses the reaction glycyl-L-proline(out) + H(+)(out) = glycyl-L-proline(in) + H(+)(in). It carries out the reaction glycyl-sarcosine(out) + H(+)(out) = glycyl-sarcosine(in) + H(+)(in). The enzyme catalyses L-leucyl-L-leucine(out) + H(+)(out) = L-leucyl-L-leucine(in) + H(+)(in). The catalysed reaction is L-leucyl-L-proline(out) + H(+)(out) = L-leucyl-L-proline(in) + H(+)(in). It catalyses the reaction L-phenylalanyl-L-leucine(out) + H(+)(out) = L-phenylalanyl-L-leucine(in) + H(+)(in). It carries out the reaction L-phenylalanyl-L-phenylalanine(out) + H(+)(out) = L-phenylalanyl-L-phenylalanine(in) + H(+)(in). The enzyme catalyses L-lysyl-glycine(out) + H(+)(out) = L-lysyl-glycine(in) + H(+)(in). The catalysed reaction is L-tyrosylglycine(out) + H(+)(out) = L-tyrosylglycine(in) + H(+)(in). It catalyses the reaction L-alanyl-L-aspartate(out) + 2 H(+)(out) = L-alanyl-L-aspartate(in) + 2 H(+)(in). It carries out the reaction L-aspartyl-glycine(out) + 2 H(+)(out) = L-aspartyl-glycine(in) + 2 H(+)(in). The enzyme catalyses glycyl-L-aspartate(out) + 2 H(+)(out) = glycyl-L-aspartate(in) + 2 H(+)(in). The catalysed reaction is glycyl-L-glutamate(out) + 2 H(+)(out) = glycyl-L-glutamate(in) + 2 H(+)(in). It catalyses the reaction L-alanyl-L-leucyl-L-alanine(out) + H(+)(out) = L-alanyl-L-leucyl-L-alanine(in) + H(+)(in). It carries out the reaction L-alanyl-L-prolylglycine(out) + H(+)(out) = L-alanyl-L-prolylglycine(in) + H(+)(in). The enzyme catalyses glycylglycyl-L-isoleucine(out) + H(+)(out) = glycylglycyl-L-isoleucine(in) + H(+)(in). The catalysed reaction is glycylglycyl-L-proline(out) + H(+)(out) = glycylglycyl-L-proline(in) + H(+)(in). It catalyses the reaction L-methionyl-L-phenylalanyl-L-methionine(out) + H(+)(out) = L-methionyl-L-phenylalanyl-L-methionine(in) + H(+)(in). It carries out the reaction N-acetyl-D-muramoyl-L-alanyl-D-isoglutamine(out) + 2 H(+)(out) = N-acetyl-D-muramoyl-L-alanyl-D-isoglutamine(in) + 2 H(+)(in). The enzyme catalyses N(alpha)-formyl-L-methionyl-L-leucyl-L-phenylalanine(out) + 2 H(+)(out) = N(alpha)-formyl-L-methionyl-L-leucyl-L-phenylalanine(in) + 2 H(+)(in). Electrogenic proton-coupled amino-acid transporter that transports oligopeptides of 2 to 4 amino acids with a preference for dipeptides. Transports neutral and monovalently charged peptides with a proton to peptide stoichiometry of 1:1 or 2:1. Primarily responsible for the absorption of dietary di- and tripeptides from the small intestinal lumen. Mediates transepithelial transport of muramyl and N-formylated bacterial dipeptides contributing to recognition of pathogenic bacteria by the mucosal immune system. The protein is Solute carrier family 15 member 1 (Slc15a1) of Rattus norvegicus (Rat).